Reading from the N-terminus, the 261-residue chain is Cytochrome c oxidase subunit 3 (261 aa).

The next 6 membrane-spanning stretches (helical) occupy residues 31–51, 82–102, 126–146, 159–179, 197–217, and 239–259; these read LVLWFHTGNIILLFTGLLLLI, PMILFITSEVCFFFAFFWAFF, PFLVPLLNTAVLLSSGVTITW, AIQALFLTVVLGIYFTILQAW, FFVATGFHGLHVIIGTTFLLV, and AWYWHFVDVVWLFLYVCIYWW.

It belongs to the cytochrome c oxidase subunit 3 family. In terms of assembly, component of the cytochrome c oxidase (complex IV, CIV), a multisubunit enzyme composed of a catalytic core of 3 subunits and several supernumerary subunits. The complex exists as a monomer or a dimer and forms supercomplexes (SCs) in the inner mitochondrial membrane with ubiquinol-cytochrome c oxidoreductase (cytochrome b-c1 complex, complex III, CIII).

The protein resides in the mitochondrion inner membrane. It catalyses the reaction 4 Fe(II)-[cytochrome c] + O2 + 8 H(+)(in) = 4 Fe(III)-[cytochrome c] + 2 H2O + 4 H(+)(out). In terms of biological role, component of the cytochrome c oxidase, the last enzyme in the mitochondrial electron transport chain which drives oxidative phosphorylation. The respiratory chain contains 3 multisubunit complexes succinate dehydrogenase (complex II, CII), ubiquinol-cytochrome c oxidoreductase (cytochrome b-c1 complex, complex III, CIII) and cytochrome c oxidase (complex IV, CIV), that cooperate to transfer electrons derived from NADH and succinate to molecular oxygen, creating an electrochemical gradient over the inner membrane that drives transmembrane transport and the ATP synthase. Cytochrome c oxidase is the component of the respiratory chain that catalyzes the reduction of oxygen to water. Electrons originating from reduced cytochrome c in the intermembrane space (IMS) are transferred via the dinuclear copper A center (CU(A)) of subunit 2 and heme A of subunit 1 to the active site in subunit 1, a binuclear center (BNC) formed by heme A3 and copper B (CU(B)). The BNC reduces molecular oxygen to 2 water molecules using 4 electrons from cytochrome c in the IMS and 4 protons from the mitochondrial matrix. This Paracentrotus lividus (Common sea urchin) protein is Cytochrome c oxidase subunit 3 (COIII).